We begin with the raw amino-acid sequence, 134 residues long: Small ribosomal subunit protein uS9 (134 aa).

Residues 109-134 (DARRTEPHKPSKSSKGPRAKRQKSYR) are disordered. Residues 118-134 (PSKSSKGPRAKRQKSYR) are compositionally biased toward basic residues.

It belongs to the universal ribosomal protein uS9 family.

This Methanococcus maripaludis (strain DSM 14266 / JCM 13030 / NBRC 101832 / S2 / LL) protein is Small ribosomal subunit protein uS9.